Consider the following 409-residue polypeptide: Elongation factor Tu (409 aa).

A tr-type G domain is found at 10–214; sequence KPHVNIGTIG…AVDSYIPDPE (205 aa). The tract at residues 19-26 is G1; sequence GHVDHGKT. 19 to 26 provides a ligand contact to GTP; sequence GHVDHGKT. A Mg(2+)-binding site is contributed by Thr26. The G2 stretch occupies residues 60–64; that stretch reads GITIN. The G3 stretch occupies residues 81–84; it reads DCPG. Residues 81-85 and 136-139 each bind GTP; these read DCPGH and NKED. The tract at residues 136–139 is G4; that stretch reads NKED. Positions 174-176 are G5; that stretch reads SGL.

Monomer.

It is found in the cytoplasm. It carries out the reaction GTP + H2O = GDP + phosphate + H(+). GTP hydrolase that promotes the GTP-dependent binding of aminoacyl-tRNA to the A-site of ribosomes during protein biosynthesis. The protein is Elongation factor Tu of Nostoc sp. (strain PCC 7120 / SAG 25.82 / UTEX 2576).